A 173-amino-acid polypeptide reads, in one-letter code: uncharacterized protein (173 aa).

Helical transmembrane passes span 24–44 (VAFI…WLFF), 82–102 (YILF…SYFI), and 135–155 (LIKR…ILFS).

The protein resides in the cell membrane. This is an uncharacterized protein from Rickettsia prowazekii (strain Madrid E).